Consider the following 331-residue polypeptide: UPF0194 membrane protein YbhG (331 aa).

Positions 1 to 19 (MKKPVVIGLVIAAIVAVIA) are cleaved as a signal peptide. Residues 140–209 (RTISANDLEN…DLQDTTLIAP (70 aa)) are a coiled coil.

The protein belongs to the UPF0194 family.

The protein localises to the periplasm. This chain is UPF0194 membrane protein YbhG (ybhG), found in Salmonella typhi.